A 118-amino-acid chain; its full sequence is MRHRKANRQLRRTSEQRLALLRNLATSLIEQGAIETTEAKAKELRPFVEKLITKARTGTLHARRLAGKHVHKREAADKLFQELGPAFATRPGGYTRILKTGHRKGDGAEMARIELILS.

The protein belongs to the bacterial ribosomal protein bL17 family. As to quaternary structure, part of the 50S ribosomal subunit. Contacts protein L32.

In Gemmatimonas aurantiaca (strain DSM 14586 / JCM 11422 / NBRC 100505 / T-27), this protein is Large ribosomal subunit protein bL17.